A 458-amino-acid chain; its full sequence is Flavohemoprotein (458 aa).

Residues 2–158 (TLSEDTLRAV…LADLFIKREE (157 aa)) enclose the Globin domain. A heme b-binding site is contributed by H107. Residues Y117 and E157 each act as charge relay system in the active site. Residues 169 to 457 (GGWRQTRTFR…FEMFGPFKAS (289 aa)) are reductase. The region spanning 172-279 (RQTRTFRVEE…APPYGDFFLR (108 aa)) is the FAD-binding FR-type domain. FAD contacts are provided by residues Y211 and 228-231 (RQYS). Residue 321–326 (GIGQTP) coordinates NADP(+). 450–453 (MFGP) serves as a coordination point for FAD.

This sequence belongs to the globin family. Two-domain flavohemoproteins subfamily. It in the C-terminal section; belongs to the flavoprotein pyridine nucleotide cytochrome reductase family. In terms of assembly, monomer. Requires heme b as cofactor. The cofactor is FAD.

The enzyme catalyses 2 nitric oxide + NADPH + 2 O2 = 2 nitrate + NADP(+) + H(+). It catalyses the reaction 2 nitric oxide + NADH + 2 O2 = 2 nitrate + NAD(+) + H(+). Functionally, flavohemoprotein involved in nitric oxide (NO) detoxification in an aerobic process, termed nitric oxide dioxygenase (NOD) reaction that utilizes O(2) and NAD(P)H to convert NO to nitrate, which protects the protozoan parasite from various noxious nitrogen compounds. Therefore, plays a central role in the inducible response to nitrosative stress. May also be involved in O(2) detoxification. In Giardia intestinalis (strain ATCC 50803 / WB clone C6) (Giardia lamblia), this protein is Flavohemoprotein (hmpA).